A 93-amino-acid chain; its full sequence is Small ribosomal subunit protein uS17 (93 aa).

This sequence belongs to the universal ribosomal protein uS17 family. In terms of assembly, part of the 30S ribosomal subunit.

Its function is as follows. One of the primary rRNA binding proteins, it binds specifically to the 5'-end of 16S ribosomal RNA. This chain is Small ribosomal subunit protein uS17, found in Corynebacterium aurimucosum (strain ATCC 700975 / DSM 44827 / CIP 107346 / CN-1) (Corynebacterium nigricans).